Consider the following 135-residue polypeptide: Large-conductance mechanosensitive channel (135 aa).

2 consecutive transmembrane segments (helical) span residues 9 to 29 (AFAA…GAAF) and 79 to 99 (IQTI…LKAI).

The protein belongs to the MscL family. As to quaternary structure, homopentamer.

The protein resides in the cell inner membrane. Its function is as follows. Channel that opens in response to stretch forces in the membrane lipid bilayer. May participate in the regulation of osmotic pressure changes within the cell. The polypeptide is Large-conductance mechanosensitive channel (Aeromonas salmonicida (strain A449)).